Reading from the N-terminus, the 525-residue chain is 2,3-bisphosphoglycerate-independent phosphoglycerate mutase 2 (525 aa).

Mn(2+)-binding residues include Asp-14 and Ser-64. The active-site Phosphoserine intermediate is Ser-64. Residues His-125, 155–156 (RD), Arg-187, Arg-193, 274–277 (RADR), and Lys-347 each bind substrate. Mn(2+) is bound by residues Asp-414, His-418, Asp-455, His-456, and His-474.

The protein belongs to the BPG-independent phosphoglycerate mutase family. Mn(2+) is required as a cofactor.

The enzyme catalyses (2R)-2-phosphoglycerate = (2R)-3-phosphoglycerate. The protein operates within carbohydrate degradation; glycolysis; pyruvate from D-glyceraldehyde 3-phosphate: step 3/5. Its function is as follows. Catalyzes the interconversion of 2-phosphoglycerate and 3-phosphoglycerate. In Methanosarcina barkeri (strain Fusaro / DSM 804), this protein is 2,3-bisphosphoglycerate-independent phosphoglycerate mutase 2.